The chain runs to 1006 residues: DNA ligase 4 (1006 aa).

Residues M1–S36 form a disordered region. 10 residues coordinate ATP: E318, K320, L321, R325, E387, F427, E487, K492, K509, and K511. Residue K320 is the N6-AMP-lysine intermediate of the active site. E387 contributes to the Mg(2+) binding site. A Mg(2+)-binding site is contributed by E487. BRCT domains lie at P718–L811 and P890–P1002.

Belongs to the ATP-dependent DNA ligase family. Mg(2+) is required as a cofactor.

It is found in the nucleus. It catalyses the reaction ATP + (deoxyribonucleotide)n-3'-hydroxyl + 5'-phospho-(deoxyribonucleotide)m = (deoxyribonucleotide)n+m + AMP + diphosphate.. Its function is as follows. DNA ligase involved in DNA non-homologous end joining (NHEJ); required for double-strand break (DSB) repair. The polypeptide is DNA ligase 4 (lig4) (Aspergillus oryzae (strain ATCC 42149 / RIB 40) (Yellow koji mold)).